Reading from the N-terminus, the 150-residue chain is Ribosome maturation factor RimP (150 aa).

It belongs to the RimP family.

The protein resides in the cytoplasm. Required for maturation of 30S ribosomal subunits. In Thermotoga sp. (strain RQ2), this protein is Ribosome maturation factor RimP.